The sequence spans 727 residues: MLQTPPDLPPVAEPVAEQVVEAVAPVPAPSPTIAVPGLDDSSLYIHRELSQLQFNIRVLEQALDENYPLLERLKFLLIFSSNLDEFFEIRVAGLKKQINFAREQAGADGLQPHQALARISELVHIEVERQYAILNDVLLPELEKHQIRFIRRRYWTPKLKTWVRRYFRDEIAPIITPIGLDPTHPFPLLVNKSLNFIVELEGVDAFGRDSGLAIIPAPRLLPRVIRVPEEVGGPGANYVFLSSMIHAHADDLFQGMKVKGCYQFRLTRNADLALDSEEVDDLARALRGELFSRRYGDAVRLEVADTCPKHLSDYLLKQFSLSESELYQVNGPVNLTRLFSITGLDSHPELQYTPFTPAIPKLLANADNIFSVISKQDILLMHPFESFTPVVDLLRQAAKDPHVLAVRQTLYRSGANSEIVDALVDAARNGKEVTAVIELRARFDEESNLQMASRLQAAGAVVIYGVVGFKTHAKMMLILRREQGEIVRYAHLGTGNYHAGNARLYTDYSLLTSDDALTEDVGKLFSQLIGMGKTLRMKKLLHAPFTLKKGMLDMIARETQFALEGKPAHIIAKFNSLTDAKVIKALYKASQSGVKIDLVVRGMCCLRPGIPGVSHNIQVRSIIGRFLEHTRVFYFLNGGEEQIYLSSADWMERNLDKRVETCFPVEGKKLLLRVKKELEGYLTDNTHAWTLQPDGRYVRSTPTGNQNPRSVQATLLERLSNPVLNVR.

Asparagine 82 contributes to the ATP binding site. 2 residues coordinate Mg(2+): arginine 412 and arginine 442. Residue histidine 472 is the Phosphohistidine intermediate of the active site. Positions 505, 601, and 629 each coordinate ATP.

This sequence belongs to the polyphosphate kinase 1 (PPK1) family. Requires Mg(2+) as cofactor. In terms of processing, an intermediate of this reaction is the autophosphorylated ppk in which a phosphate is covalently linked to a histidine residue through a N-P bond.

The catalysed reaction is [phosphate](n) + ATP = [phosphate](n+1) + ADP. Functionally, catalyzes the reversible transfer of the terminal phosphate of ATP to form a long-chain polyphosphate (polyP). This Pseudomonas putida (strain ATCC 47054 / DSM 6125 / CFBP 8728 / NCIMB 11950 / KT2440) protein is Polyphosphate kinase.